The chain runs to 1018 residues: Contactin-1 (1018 aa).

The first 20 residues, 1–20, serve as a signal peptide directing secretion; the sequence is MKMWLLFSLLVIISFKTCLS. 6 consecutive Ig-like C2-type domains span residues 41 to 131, 137 to 223, 241 to 326, 331 to 407, 413 to 500, and 504 to 601; these read PIFE…ATLS, PFPP…KSVF, PADI…ARIY, PEWV…AELK, PTFE…GTLV, and PTRI…LVVR. Cystine bridges form between Cys65-Cys114 and Cys158-Cys211. N-linked (GlcNAc...) asparagine glycosylation is found at Asn208 and Asn258. Cys263 and Cys310 are oxidised to a cystine. Asn338 carries an N-linked (GlcNAc...) asparagine glycan. Disulfide bonds link Cys352/Cys391 and Cys436/Cys484. N-linked (GlcNAc...) asparagine glycosylation is found at Asn457, Asn473, Asn494, and Asn521. Cysteines 526 and 583 form a disulfide. Asn591 carries an N-linked (GlcNAc...) asparagine glycan. Fibronectin type-III domains are found at residues 606–704, 709–806, 811–906, and 907–1000; these read PPGG…TDGA, APSD…SAQD, APTA…APPS, and QPPR…ILSP. Disordered stretches follow at residues 698-718 and 891-910; these read KIKT…GGGG and PPSD…QPPR. A lipid anchor (GPI-anchor amidated serine) is attached at Ser999. Residues 1000 to 1018 constitute a propeptide, removed in mature form; it reads PCLLGFLLPALGILVYLEF.

The protein belongs to the immunoglobulin superfamily. Contactin family. As to quaternary structure, monomer. Interacts with CNTNAP1 in cis form. Binds to the carbonic-anhydrase like domain of PTPRZ1. Interacts with NOTCH1 and TNR. Detected in a complex with NRCAM and PTPRB. Interacts with TASOR.

Its subcellular location is the cell membrane. Functionally, contactins mediate cell surface interactions during nervous system development. Involved in the formation of paranodal axo-glial junctions in myelinated peripheral nerves and in the signaling between axons and myelinating glial cells via its association with CNTNAP1. Participates in oligodendrocytes generation by acting as a ligand of NOTCH1. Its association with NOTCH1 promotes NOTCH1 activation through the released notch intracellular domain (NICD) and subsequent translocation to the nucleus. Interaction with TNR induces a repulsion of neurons and an inhibition of neurite outgrowth. The chain is Contactin-1 (CNTN1) from Bos taurus (Bovine).